We begin with the raw amino-acid sequence, 390 residues long: S-adenosylmethionine synthase (390 aa).

His-17 is an ATP binding site. Mg(2+) is bound at residue Asp-19. Glu-45 contributes to the K(+) binding site. The L-methionine site is built by Glu-58 and Gln-101. The interval 101 to 111 (QSPDIGQGVDT) is flexible loop. Residues 160 to 162 (DGK), 226 to 227 (RF), Asp-235, 241 to 242 (RK), Ala-258, and Lys-262 each bind ATP. An L-methionine-binding site is contributed by Asp-235. Lys-266 is a binding site for L-methionine.

The protein belongs to the AdoMet synthase family. Homotetramer; dimer of dimers. Mg(2+) serves as cofactor. The cofactor is K(+).

The protein resides in the cytoplasm. It carries out the reaction L-methionine + ATP + H2O = S-adenosyl-L-methionine + phosphate + diphosphate. Its pathway is amino-acid biosynthesis; S-adenosyl-L-methionine biosynthesis; S-adenosyl-L-methionine from L-methionine: step 1/1. Its function is as follows. Catalyzes the formation of S-adenosylmethionine (AdoMet) from methionine and ATP. The overall synthetic reaction is composed of two sequential steps, AdoMet formation and the subsequent tripolyphosphate hydrolysis which occurs prior to release of AdoMet from the enzyme. This Anaeromyxobacter dehalogenans (strain 2CP-1 / ATCC BAA-258) protein is S-adenosylmethionine synthase.